A 339-amino-acid chain; its full sequence is Nicotinate-nucleotide--dimethylbenzimidazole phosphoribosyltransferase (339 aa).

Catalysis depends on glutamate 306, which acts as the Proton acceptor.

Belongs to the CobT family.

It carries out the reaction 5,6-dimethylbenzimidazole + nicotinate beta-D-ribonucleotide = alpha-ribazole 5'-phosphate + nicotinate + H(+). It functions in the pathway nucleoside biosynthesis; alpha-ribazole biosynthesis; alpha-ribazole from 5,6-dimethylbenzimidazole: step 1/2. Catalyzes the synthesis of alpha-ribazole-5'-phosphate from nicotinate mononucleotide (NAMN) and 5,6-dimethylbenzimidazole (DMB). The chain is Nicotinate-nucleotide--dimethylbenzimidazole phosphoribosyltransferase from Brucella melitensis biotype 1 (strain ATCC 23456 / CCUG 17765 / NCTC 10094 / 16M).